Reading from the N-terminus, the 244-residue chain is uncharacterized protein (244 aa).

The 69-residue stretch at 12–80 (VALWRQIADR…QGRGTMIERK (69 aa)) folds into the HTH gntR-type domain. The segment at residues 40–59 (ETALAAEFGVNRHTVRSALA) is a DNA-binding region (H-T-H motif).

This is an uncharacterized protein from Rhizobium meliloti (strain 1021) (Ensifer meliloti).